A 188-amino-acid chain; its full sequence is MLLIDNGIEKMALKLQQRQNLSHIEFLKVRLGMQVVVINTFKAIVTYGLALLLNIFLYTLIVHLTFLTLRTYSHGAHAKTSMLCHVQNIVAFVMLPWLIVQYDISFQFLLILSLLSALIVIKYAPAATKKRPIAPKKVKGLKIKSIIVFVLLMTIACIVPPPYNRFVVYGVLLQSFTLLPIFSIKEEV.

The next 4 membrane-spanning stretches (helical) occupy residues 49-69 (LALL…FLTL), 104-126 (ISFQ…YAPA), 143-163 (IKSI…PPPY), and 166-186 (FVVY…SIKE).

Belongs to the AgrB family.

The protein localises to the cell membrane. In terms of biological role, essential for the production of a quorum sensing system signal molecule, the autoinducing peptide (AIP). This quorum sensing system is responsible for the regulation of the expression of virulence factor genes. Involved in the proteolytic processing of AgrD, the precursor of AIP. This chain is Accessory gene regulator protein B, found in Staphylococcus intermedius.